A 123-amino-acid chain; its full sequence is Putative iron-sulfur cluster insertion protein ErpA (123 aa).

Iron-sulfur cluster-binding residues include cysteine 51, cysteine 115, and cysteine 117.

Belongs to the HesB/IscA family. Homodimer. Iron-sulfur cluster is required as a cofactor.

Functionally, required for insertion of 4Fe-4S clusters. In Burkholderia cenocepacia (strain HI2424), this protein is Putative iron-sulfur cluster insertion protein ErpA.